A 222-amino-acid chain; its full sequence is Triosephosphate isomerase (222 aa).

9–11 (NYK) contributes to the substrate binding site. The active-site Electrophile is His93. Glu141 (proton acceptor) is an active-site residue. Residues Ile146, Gly181, and 202-203 (AS) each bind substrate.

This sequence belongs to the triosephosphate isomerase family. In terms of assembly, homotetramer; dimer of dimers.

Its subcellular location is the cytoplasm. It carries out the reaction D-glyceraldehyde 3-phosphate = dihydroxyacetone phosphate. It functions in the pathway carbohydrate biosynthesis; gluconeogenesis. Its pathway is carbohydrate degradation; glycolysis; D-glyceraldehyde 3-phosphate from glycerone phosphate: step 1/1. Its function is as follows. Involved in the gluconeogenesis. Catalyzes stereospecifically the conversion of dihydroxyacetone phosphate (DHAP) to D-glyceraldehyde-3-phosphate (G3P). This chain is Triosephosphate isomerase, found in Methanosarcina acetivorans (strain ATCC 35395 / DSM 2834 / JCM 12185 / C2A).